The chain runs to 396 residues: Polygalacturonase (396 aa).

A signal peptide spans 1–22; sequence MDLKFKVHFALVLLFLAHFGES. Residues Asn143, Asn151, Asn174, Asn181, Asn203, and Asn208 are each glycosylated (N-linked (GlcNAc...) asparagine). PbH1 repeat units lie at residues 172 to 198 and 199 to 220; these read CKNL…HVSR and SSSV…SVGD. Residue Asp213 is the Proton donor of the active site. An intrachain disulfide couples Cys215 to Cys232. Residue His236 is part of the active site. PbH1 repeat units lie at residues 252–273, 282–303, and 316–356; these read VVGV…RIKT, VNDV…VIDQ, and PSQV…EVGD. 2 N-linked (GlcNAc...) asparagine glycosylation sites follow: Asn259 and Asn294. The segment at 364-396 is disordered; that stretch reads KEGPAKSSCENIKPSLKGKQNPPVCTASAASSS. Residues Cys372 and Cys388 are joined by a disulfide bond.

This sequence belongs to the glycosyl hydrolase 28 family. In terms of tissue distribution, pollen.

It is found in the secreted. Its subcellular location is the cell wall. It carries out the reaction (1,4-alpha-D-galacturonosyl)n+m + H2O = (1,4-alpha-D-galacturonosyl)n + (1,4-alpha-D-galacturonosyl)m.. In terms of biological role, may function in depolymerizing pectin during pollen development, germination, and tube growth. The chain is Polygalacturonase (PG1) from Nicotiana tabacum (Common tobacco).